The following is a 260-amino-acid chain: HTH-type transcriptional repressor NanR (260 aa).

The disordered stretch occupies residues 1 to 22 (MNAFDSQAEDSPTSLGRSLRRR). The 69-residue stretch at 27–95 (KKLSEMVEEE…NGERARVSRP (69 aa)) folds into the HTH gntR-type domain. The H-T-H motif DNA-binding region spans 55–74 (ERELMAFFNVGRPSVREALA).

The protein belongs to the NanR family.

Functionally, transcriptional repressor that controls expression of the genes required for the catabolism of sialic acids. The protein is HTH-type transcriptional repressor NanR of Salmonella newport (strain SL254).